The following is a 132-amino-acid chain: Transcription antitermination protein NusB (132 aa).

Belongs to the NusB family.

Involved in transcription antitermination. Required for transcription of ribosomal RNA (rRNA) genes. Binds specifically to the boxA antiterminator sequence of the ribosomal RNA (rrn) operons. This is Transcription antitermination protein NusB from Campylobacter jejuni subsp. jejuni serotype O:2 (strain ATCC 700819 / NCTC 11168).